The chain runs to 446 residues: MARTGLQRHRGKLLGTGAVLGGLVVAGVVAAVAAKRWVRRQQQRLSEQHYVREQIKRRFTQTQQDALYTMYELVPVLALVLGKELDVEELVETLKGKKLKRAGEDDEQGSGGHASAGEGSVSSTVARSKAELWQELKMRSAVKLLAVVYTTCMLLLLTRLQLNILARREYLETAIRVAKGEEATRRDAAGWLGAVWEYGAAALGALGPRPAVTAVEPVDQHEETRYVNEQAFLSLSWWLLNRGWLQFKPLIERQVEQQFGTLSPRDTLSMEQFSARLSNTIHAVNRELFDSDSRALLLRALLPDATEELHVLQQTLDEGSLRVIERDDSMLRELLQETCRCAESTASLIVLESLVNESFQFVMQQLETKVTKKLRKPATDAPEADGAADAPSQKFQVALYSVALKDCCQEMLKNGLVSMNNEYLQDLDAVPELDDLSASVYSNFGV.

The Peroxisomal segment spans residues 1–12; the sequence is MARTGLQRHRGK. The helical transmembrane segment at 13-33 threads the bilayer; the sequence is LLGTGAVLGGLVVAGVVAAVA. The Cytoplasmic portion of the chain corresponds to 34–446; it reads AKRWVRRQQQ…SASVYSNFGV (413 aa). The interval 101–122 is disordered; the sequence is RAGEDDEQGSGGHASAGEGSVS.

Belongs to the peroxin-3 family.

It localises to the peroxisome membrane. Its function is as follows. Involved in peroxisome biosynthesis. This is Peroxisomal biogenesis factor 3 (PEX3) from Eremothecium gossypii (strain ATCC 10895 / CBS 109.51 / FGSC 9923 / NRRL Y-1056) (Yeast).